A 217-amino-acid polypeptide reads, in one-letter code: Nucleolar protein 12 (217 aa).

A coiled-coil region spans residues 34 to 98 (GFHKRKVERK…LVTAKTESVQ (65 aa)). The disordered stretch occupies residues 122 to 217 (LGLPLPEQGD…MTGKARHNGE (96 aa)). A compositionally biased stretch (acidic residues) spans 130-141 (GDQDGSQEEEMS). Basic residues-rich tracts occupy residues 172–184 (AHSR…KHPR) and 201–217 (KTQR…HNGE).

Belongs to the RRP17 family. As to quaternary structure, interacts with KIAA1191. As to expression, expressed in brain, lung, spleen, kidney and heart.

Its subcellular location is the nucleus. The protein localises to the nucleolus. It is found in the cytoplasm. In terms of biological role, multifunctional RNA binding protein that plays a role in RNA metabolism and DNA maintenance. Participates in the resolution of DNA stress and the maintenance of genome integrity by localizing to sites of DNA insults. Also plays a role in proper nucleolar organization by limiting nucleolar size and regulating nucleolar number. Mechanistically, regulates the nucleolar levels of fibrillarin and nucleolin, two key players in pre-rRNA processing and ribosome assembly. In Mus musculus (Mouse), this protein is Nucleolar protein 12 (Nol12).